The following is a 223-amino-acid chain: MTTQDELKRIAAEKAVEFVPENEYIGIGTGSTINFFIEALGKSGKKIKGAVSTSKKSSELLAQYDIPVVSLNEVSGLAVYIDGADEVNHALQMIKGGGGAHLNEKIVASASEKFVCIADESKYVSRLGKFPLPVEVVESARSLVSRKLLAMGGQPELRIGYTTFYGNQIVDVHGLNIDKPLMMEDEINKITGVLENGIFARDAADVLILGTEEGAKVIYPCQG.

Residues 29 to 32, 82 to 85, and 95 to 98 each bind substrate; these read TGST, DGAD, and KGGG. The active-site Proton acceptor is Glu-104. Residue Lys-122 coordinates substrate.

This sequence belongs to the ribose 5-phosphate isomerase family. Homodimer.

It carries out the reaction aldehydo-D-ribose 5-phosphate = D-ribulose 5-phosphate. It participates in carbohydrate degradation; pentose phosphate pathway; D-ribose 5-phosphate from D-ribulose 5-phosphate (non-oxidative stage): step 1/1. Functionally, catalyzes the reversible conversion of ribose-5-phosphate to ribulose 5-phosphate. The chain is Ribose-5-phosphate isomerase A from Neisseria meningitidis serogroup C / serotype 2a (strain ATCC 700532 / DSM 15464 / FAM18).